Here is a 360-residue protein sequence, read N- to C-terminus: Peptide chain release factor 1 (360 aa).

Position 235 is an N5-methylglutamine (Q235). Residues 285–308 (KRQEAEASERRNLLGSGDRSDRNR) are compositionally biased toward basic and acidic residues. The disordered stretch occupies residues 285 to 313 (KRQEAEASERRNLLGSGDRSDRNRTYNFP).

It belongs to the prokaryotic/mitochondrial release factor family. Methylated by PrmC. Methylation increases the termination efficiency of RF1.

Its subcellular location is the cytoplasm. Its function is as follows. Peptide chain release factor 1 directs the termination of translation in response to the peptide chain termination codons UAG and UAA. This chain is Peptide chain release factor 1, found in Photorhabdus laumondii subsp. laumondii (strain DSM 15139 / CIP 105565 / TT01) (Photorhabdus luminescens subsp. laumondii).